Here is a 574-residue protein sequence, read N- to C-terminus: Ankyrin repeat protein B18 (574 aa).

ANK repeat units follow at residues 56–87 (TGYT…NVTM), 135–164 (IKSR…DPNF), 167–213 (DGYT…NLNA), 217–249 (CGNT…NFKI), 253–285 (HGLT…NVGE), and 327–356 (EGKT…DINA). Residues 541-574 (NCLLTLLPSEIIYEILYMLTINDLYNISYPPTKV) form the F-box domain.

The protein is Ankyrin repeat protein B18 of Homo sapiens (Human).